Consider the following 412-residue polypeptide: Argininosuccinate synthase (412 aa).

ATP-binding positions include 15–23 (AYSGGLDTS) and alanine 42. L-citrulline-binding residues include tyrosine 93 and serine 98. Glycine 123 contacts ATP. L-aspartate-binding residues include threonine 125, asparagine 129, and aspartate 130. Asparagine 129 is a binding site for L-citrulline. L-citrulline contacts are provided by arginine 133, serine 185, serine 194, glutamate 270, and tyrosine 282.

The protein belongs to the argininosuccinate synthase family. Type 1 subfamily. Homotetramer.

Its subcellular location is the cytoplasm. The enzyme catalyses L-citrulline + L-aspartate + ATP = 2-(N(omega)-L-arginino)succinate + AMP + diphosphate + H(+). The protein operates within amino-acid biosynthesis; L-arginine biosynthesis; L-arginine from L-ornithine and carbamoyl phosphate: step 2/3. The protein is Argininosuccinate synthase of Psychrobacter arcticus (strain DSM 17307 / VKM B-2377 / 273-4).